The chain runs to 332 residues: Ferredoxin--NADP reductase 2 (332 aa).

Positions 37, 45, 50, 90, 124, 285, and 326 each coordinate FAD.

This sequence belongs to the ferredoxin--NADP reductase type 2 family. In terms of assembly, homodimer. It depends on FAD as a cofactor.

The enzyme catalyses 2 reduced [2Fe-2S]-[ferredoxin] + NADP(+) + H(+) = 2 oxidized [2Fe-2S]-[ferredoxin] + NADPH. The protein is Ferredoxin--NADP reductase 2 (yumC) of Bacillus subtilis (strain 168).